We begin with the raw amino-acid sequence, 753 residues long: Polyribonucleotide nucleotidyltransferase (753 aa).

The Mg(2+) site is built by D488 and D494. The region spanning 555–614 (PRLLRTKISPDKIGALIGPGGKNIRGIQETTGAVIEVDDEGTVLVASSNKESAQEAMRQV) is the KH domain. The 69-residue stretch at 624-692 (GKIYDGTVSS…EHDRVKLSRR (69 aa)) folds into the S1 motif domain. The segment covering 698–719 (LGEEDPLAVEGEGGGDSEGGGD) has biased composition (acidic residues). A disordered region spans residues 698-753 (LGEEDPLAVEGEGGGDSEGGGDGEDRPRRRRGGSGGGGGGGRGRGPRRSGGGRDRD). The segment covering 730–740 (GSGGGGGGGRG) has biased composition (gly residues).

The protein belongs to the polyribonucleotide nucleotidyltransferase family. Requires Mg(2+) as cofactor.

The protein localises to the cytoplasm. It carries out the reaction RNA(n+1) + phosphate = RNA(n) + a ribonucleoside 5'-diphosphate. Its function is as follows. Involved in mRNA degradation. Catalyzes the phosphorolysis of single-stranded polyribonucleotides processively in the 3'- to 5'-direction. This Rhodopirellula baltica (strain DSM 10527 / NCIMB 13988 / SH1) protein is Polyribonucleotide nucleotidyltransferase.